We begin with the raw amino-acid sequence, 503 residues long: MKNRLNVLAFFALLFAALYISRGFLQSWMVGTLSVVFTLSVIFIGIIIFFENRHPTKTLTWLLVLAAFPVVGFFFYLMFGQNHRKSKRFSKKAIEDERAFQKIEGQRQLNEEQLKKMGGHQQLLFRLAHKLGKNPISFSSETKVLTDGKETYAHILQALKMAEHHIHLEYYIVRHDDLGNQIKDILISKAKEGVHVRFLYDGVGSWKLSKSYVEELRDAGVEMVSFSPVKLPFLTHTINYRNHRKIIVIDGVVGFVGGLNIGDEYLGKDAYFGYWRDTHLYVRGEAVRTLQLIFLQDWHYQTGETILNQTYLSPSLSMTKGDGGVQMIASGPDTRWEVNKKLFFSMITSAKKSIWIASPYFIPDDDILSALKIAALSGIDVRILVPNRPDKRIVFHASRSYFPELLEAGVKVYEYNRGFMHSKIIIVDHEIASIGTSNMDMRSFHLNFEVNAYLYRTSSVTKLVSDYVYDLEHSNQINFSLFKNRPFFHRLIESTSRLLSPLL.

The next 3 helical transmembrane spans lie at 5 to 25 (LNVL…RGFL), 30 to 50 (VGTL…IIFF), and 59 to 79 (LTWL…YLMF). PLD phosphodiesterase domains follow at residues 238 to 265 (INYR…GDEY) and 416 to 443 (NRGF…DMRS). Active-site residues include H243, K245, D250, H421, K423, and D428.

Belongs to the phospholipase D family. Cardiolipin synthase subfamily.

Its subcellular location is the cell membrane. It catalyses the reaction 2 a 1,2-diacyl-sn-glycero-3-phospho-(1'-sn-glycerol) = a cardiolipin + glycerol. In terms of biological role, catalyzes the reversible phosphatidyl group transfer from one phosphatidylglycerol molecule to another to form cardiolipin (CL) (diphosphatidylglycerol) and glycerol. The protein is Cardiolipin synthase (cls) of Alkalihalophilus pseudofirmus (strain ATCC BAA-2126 / JCM 17055 / OF4) (Bacillus pseudofirmus).